The following is a 509-amino-acid chain: 5-OH-xanthotoxin synthase (509 aa).

Residues 5–25 (AVVILLILAFPIASVYVLFYH) form a helical membrane-spanning segment. A substrate specificity region spans residues 368-373 (TGALLI). Cys-449 is a heme binding site.

It belongs to the cytochrome P450 family. The cofactor is heme.

The protein localises to the microsome membrane. It catalyses the reaction xanthotoxin + reduced [NADPH--hemoprotein reductase] + O2 = 5-hydroxyxanthotoxin + oxidized [NADPH--hemoprotein reductase] + H2O + 2 H(+). Its pathway is secondary metabolite biosynthesis. Its function is as follows. Involved in the biosynthesis of coumarins and furanocoumarins (FCs), natural products required for defense responses against attacks by predators with potential medical and agroindustrial usages such as anticoagulant, rodenticide and artificial vanilla substitutes. Catalyzes the conversion of xanthotoxin into 5-hydroxyxanthotoxin. The polypeptide is 5-OH-xanthotoxin synthase (Ammi majus (Bishop's weed)).